A 281-amino-acid polypeptide reads, in one-letter code: CCAAT/enhancer-binding protein epsilon (281 aa).

Residues 1–30 (MSHGTYYECEPRGGQQPLEFSGGRAGPGEL) are disordered. Residue Lys-121 forms a Glycyl lysine isopeptide (Lys-Gly) (interchain with G-Cter in SUMO2) linkage. Ser-181 carries the phosphoserine modification. In terms of domain architecture, bZIP spans 204–267 (SLEYRLRRER…DTLRNLFRQI (64 aa)). The segment at 208–245 (RLRRERNNIAVRKSRDKAKRRIMETQQKVLEYMAENER) is basic motif. A leucine-zipper region spans residues 246-267 (LRNRVDQLTQELDTLRNLFRQI).

The protein belongs to the bZIP family. C/EBP subfamily. As to quaternary structure, binds DNA as a homodimer and as a heterodimer. Can form stable heterodimers with CEBPA, CEBPB and CEBPD. Interacts with GATA1 and SPI1. Interacts with SMARCD2. In terms of processing, phosphorylated.

Its subcellular location is the nucleus. In terms of biological role, transcriptional activator. C/EBP are DNA-binding proteins that recognize two different motifs: the CCAAT homology common to many promoters and the enhanced core homology common to many enhancers. Required for the promyelocyte-myelocyte transition in myeloid differentiation. This chain is CCAAT/enhancer-binding protein epsilon (Cebpe), found in Mus musculus (Mouse).